The chain runs to 71 residues: Small integral membrane protein 31 (71 aa).

Residues 8-28 form a helical membrane-spanning segment; that stretch reads LEMAFILLAFVIFSLFTLASI. The interval 31–71 is disordered; it reads TPDDSNEEEEHEKKGREKKRKKSEKKKNCSEEEHRIEAVEL. Residues 46–55 are compositionally biased toward basic residues; sequence REKKRKKSEK. A compositionally biased stretch (basic and acidic residues) spans 56-71; the sequence is KKNCSEEEHRIEAVEL. A glycan (N-linked (GlcNAc...) asparagine) is linked at Asn-58.

Its subcellular location is the membrane. In Homo sapiens (Human), this protein is Small integral membrane protein 31.